The sequence spans 675 residues: Acetyl-coenzyme A synthetase 1 (675 aa).

Residues 1–10 (MPESTQQSHL) show a composition bias toward polar residues. The segment at 1-32 (MPESTQQSHLSLDHEKMQQPPKGFTERSKTKP) is disordered. CoA-binding positions include 212–215 (RGGK) and Thr-331. ATP is bound by residues 407 to 409 (GEP), 431 to 436 (DTYWQT), Asp-522, and Arg-537. Ser-545 is a binding site for CoA. Arg-548 is a binding site for ATP. Arg-609 serves as a coordination point for CoA.

This sequence belongs to the ATP-dependent AMP-binding enzyme family.

It carries out the reaction acetate + ATP + CoA = acetyl-CoA + AMP + diphosphate. The chain is Acetyl-coenzyme A synthetase 1 (ACS1) from Candida albicans (Yeast).